The primary structure comprises 535 residues: Importin subunit alpha-2 (535 aa).

The region spanning 1 to 58 is the IBB domain; sequence MSLRPNAKTEVRRNRYKVAVDAEEGRRRREDNMVEIRKSKREESLQKKRREGLQANQL. Residues 20-46 show a composition bias toward basic and acidic residues; the sequence is VDAEEGRRRREDNMVEIRKSKREESLQ. A disordered region spans residues 20–67; sequence VDAEEGRRRREDNMVEIRKSKREESLQKKRREGLQANQLPQFAPSPVP. 10 ARM repeats span residues 67–106, 110–150, 153–192, 195–235, 237–276, 279–318, 321–361, 364–403, 407–446, and 461–500; these read PASS…KLLS, SPPI…NIAS, SENT…NVAG, PRCR…NFCR, KPQP…YLSD, NDKI…NIVT, DLQT…NITA, RDQI…NATS, PDQI…NILK, and NFYA…TYWL.

This sequence belongs to the importin alpha family. Forms a complex with the importin subunit beta-1 KPNB1. Interacts with A.tumefaciens VirD2 and VirE2. Binds to SWO1.

It is found in the nucleus envelope. In terms of biological role, binds to conventional NLS motifs and mediates nuclear protein import across the nuclear envelope. Involved in the maintenance of cell wall integrity under salt stress via interaction with SWO1. Acts as a cellular receptor for the nuclear import of the virD2 protein of Agrobacterium, but is not essential for Agrobacterium-mediated root transformation. The sequence is that of Importin subunit alpha-2 from Arabidopsis thaliana (Mouse-ear cress).